The following is a 233-amino-acid chain: Phosphatidylserine decarboxylase proenzyme (233 aa).

Catalysis depends on S190, which acts as the Schiff-base intermediate with substrate; via pyruvic acid. S190 carries the post-translational modification Pyruvic acid (Ser); by autocatalysis.

It belongs to the phosphatidylserine decarboxylase family. PSD-A subfamily. Heterodimer of a large membrane-associated beta subunit and a small pyruvoyl-containing alpha subunit. It depends on pyruvate as a cofactor. Is synthesized initially as an inactive proenzyme. Formation of the active enzyme involves a self-maturation process in which the active site pyruvoyl group is generated from an internal serine residue via an autocatalytic post-translational modification. Two non-identical subunits are generated from the proenzyme in this reaction, and the pyruvate is formed at the N-terminus of the alpha chain, which is derived from the carboxyl end of the proenzyme. The post-translation cleavage follows an unusual pathway, termed non-hydrolytic serinolysis, in which the side chain hydroxyl group of the serine supplies its oxygen atom to form the C-terminus of the beta chain, while the remainder of the serine residue undergoes an oxidative deamination to produce ammonia and the pyruvoyl prosthetic group on the alpha chain.

It is found in the cell membrane. It catalyses the reaction a 1,2-diacyl-sn-glycero-3-phospho-L-serine + H(+) = a 1,2-diacyl-sn-glycero-3-phosphoethanolamine + CO2. It participates in phospholipid metabolism; phosphatidylethanolamine biosynthesis; phosphatidylethanolamine from CDP-diacylglycerol: step 2/2. Catalyzes the formation of phosphatidylethanolamine (PtdEtn) from phosphatidylserine (PtdSer). The protein is Phosphatidylserine decarboxylase proenzyme of Azorhizobium caulinodans (strain ATCC 43989 / DSM 5975 / JCM 20966 / LMG 6465 / NBRC 14845 / NCIMB 13405 / ORS 571).